The sequence spans 653 residues: Potassium voltage-gated channel subfamily A member 4 (653 aa).

At 1-304 (MEVAMVSAES…LLFEYPESSS (304 aa)) the chain is on the cytoplasmic side. The interval 24–148 (QARARERERL…RFYYSEDDHG (125 aa)) is disordered. Over residues 36–52 (SRAAAAAAVAAATAAVE) the composition is skewed to low complexity. Positions 81-97 (GSRRRRRQRSEKKKAHY) are enriched in basic residues. Phosphoserine; by PKA is present on Ser90. At Ser122 the chain carries Phosphoserine. A compositionally biased stretch (acidic residues) spans 122-137 (SEEEEDEEEEEEEEEE). Residues 305-326 (PARGIAIVSVLVILISIVIFCL) traverse the membrane as a helical segment. The Extracellular portion of the chain corresponds to 327–370 (ETLPEFRDDRDLVMALSAGGHGGLLNDTSAPHLENSGHTIFNDP). Asn352 carries N-linked (GlcNAc...) asparagine glycosylation. A helical membrane pass occupies residues 371–392 (FFIVETVCIVWFSFEFVVRCFA). At 393–403 (CPSQALFFKNI) the chain is on the cytoplasmic side. The chain crosses the membrane as a helical span at residues 404-424 (MNIIDIVSILPYFITLGTDLA). The Extracellular segment spans residues 425-439 (QQQGGGNGQQQQAMS). The helical; Voltage-sensor transmembrane segment at 440–460 (FAILRIIRLVRVFRIFKLSRH) threads the bilayer. Over 461–475 (SKGLQILGHTLRASM) the chain is Cytoplasmic. The tract at residues 462–475 (KGLQILGHTLRASM) is S4-S5 linker. The helical transmembrane segment at 476-497 (RELGLLIFFLFIGVILFSSAVY) threads the bilayer. Over 498–511 (FAEADEPTTHFQSI) the chain is Extracellular. Positions 512–523 (PDAFWWAVVTMT) form an intramembrane region, helical. The Selectivity filter signature appears at 524-529 (TVGYGD). The stretch at 524 to 531 (TVGYGDMK) is an intramembrane region. Residues 532–538 (PITVGGK) are Extracellular-facing. Residues 539–567 (IVGSLCAIAGVLTIALPVPVIVSNFNYFY) traverse the membrane as a helical segment. At 568 to 653 (HRETENEEQT…SNAKAVETDV (86 aa)) the chain is on the cytoplasmic side. At Ser599 the chain carries Phosphoserine; by PKA. The segment covering 629 to 640 (CQGKGDDSETDK) has biased composition (basic and acidic residues). The disordered stretch occupies residues 629–653 (CQGKGDDSETDKNNCSNAKAVETDV). A PDZ-binding motif is present at residues 651 to 653 (TDV).

Belongs to the potassium channel family. A (Shaker) (TC 1.A.1.2) subfamily. Kv1.4/KCNA4 sub-subfamily. As to quaternary structure, homotetramer and heterotetramer of potassium channel proteins. Interacts with KCNAB1 and KCNAB2. Interacts with DLG1, DLG2 and DLG4 via their PDZ domains. Interacts with SIGMAR1. Detected in a complex with KCNA1. Interacts with KCNA2. Part of a complex containing KCNA1, KCNAB1 and LGI1. Interacts (via cytoplasmic N-terminal domain) with KCNRG. In terms of tissue distribution, expressed in brain, and at lower levels in the testis, lung, kidney, colon and heart. Detected in heart ventricle.

The protein localises to the cell membrane. It localises to the cell projection. The protein resides in the axon. The catalysed reaction is K(+)(in) = K(+)(out). Its activity is regulated as follows. Inhibited by 4-aminopyridine (4-AP), but not by tetraethylammonium (TEA) and charybdotoxin (CTX). Functionally, voltage-gated potassium channel that mediates transmembrane potassium transport in excitable membranes. Forms tetrameric potassium-selective channels through which potassium ions pass in accordance with their electrochemical gradient. The channel alternates between opened and closed conformations in response to the voltage difference across the membrane. Can form functional homotetrameric channels and heterotetrameric channels that contain variable proportions of KCNA1, KCNA2, KCNA4, KCNA5, and possibly other family members as well; channel properties depend on the type of alpha subunits that are part of the channel. Channel properties are modulated by cytoplasmic beta subunits that regulate the subcellular location of the alpha subunits and promote rapid inactivation. In vivo, membranes probably contain a mixture of heteromeric potassium channel complexes, making it difficult to assign currents observed in intact tissues to any particular potassium channel family member. Homotetrameric KCNA4 forms a potassium channel that opens in response to membrane depolarization, followed by rapid spontaneous channel closure. Likewise, a heterotetrameric channel formed by KCNA1 and KCNA4 shows rapid inactivation. The chain is Potassium voltage-gated channel subfamily A member 4 (KCNA4) from Homo sapiens (Human).